The sequence spans 416 residues: Sulfoquinovosyl glycerol-binding protein SmoF (416 aa).

The N-terminal stretch at 1-29 (MTLKTIRGKALMGAALCATMLTFSGQAFA) is a signal peptide. 3-(6-sulfo-alpha-D-quinovosyl)glycerol is bound at residue Gln40. His41 lines the 6-sulfo-D-quinovose pocket. Residues Ser71, Asp95, Asp141, Gly194, Thr248, Gly303, Trp304, and Arg373 each contribute to the 3-(6-sulfo-alpha-D-quinovosyl)glycerol site. 6-sulfo-D-quinovose is bound by residues Gly303, Trp304, and Arg373.

It belongs to the bacterial solute-binding protein 1 family. In terms of assembly, the complex is probably composed of two ATP-binding proteins (SmoE), two transmembrane proteins (SmoG and SmoH) and a solute-binding protein (SmoF).

The protein resides in the periplasm. In terms of biological role, part of the ABC transporter complex SmoEFGH involved in sulfoquinovosyl glycerol (SQGro) uptake. Binds sulfoquinovosyl glycerol (SQGro). Can also bind sulfoquinovose (SQ), methyl alpha-sulfoquinovoside (SQMe) and a short-chain derivative of sulfoquinovosyl diacylglycerol (SQDG). Cannot bind D-glucose and D-glucuronic acid. The sequence is that of Sulfoquinovosyl glycerol-binding protein SmoF from Agrobacterium fabrum (strain C58 / ATCC 33970) (Agrobacterium tumefaciens (strain C58)).